Here is a 420-residue protein sequence, read N- to C-terminus: F420-non-reducing hydrogenase vhu subunit A (420 aa).

Ni(2+) is bound by residues Cys-61 and Cys-64.

Belongs to the [NiFe]/[NiFeSe] hydrogenase large subunit family. As to quaternary structure, the F420-non-reducing hydrogenase vhu is composed of four subunits; VhuA, VhuD, VhuG and VhuU. Requires Ni(2+) as cofactor.

This Methanococcus voltae protein is F420-non-reducing hydrogenase vhu subunit A (vhuA).